Reading from the N-terminus, the 961-residue chain is Glycine dehydrogenase (decarboxylating) (961 aa).

An N6-(pyridoxal phosphate)lysine modification is found at Lys702.

Belongs to the GcvP family. The glycine cleavage system is composed of four proteins: P, T, L and H. It depends on pyridoxal 5'-phosphate as a cofactor.

The enzyme catalyses N(6)-[(R)-lipoyl]-L-lysyl-[glycine-cleavage complex H protein] + glycine + H(+) = N(6)-[(R)-S(8)-aminomethyldihydrolipoyl]-L-lysyl-[glycine-cleavage complex H protein] + CO2. The glycine cleavage system catalyzes the degradation of glycine. The P protein binds the alpha-amino group of glycine through its pyridoxal phosphate cofactor; CO(2) is released and the remaining methylamine moiety is then transferred to the lipoamide cofactor of the H protein. The sequence is that of Glycine dehydrogenase (decarboxylating) from Rhodopseudomonas palustris (strain BisA53).